Here is a 327-residue protein sequence, read N- to C-terminus: tRNA-dihydrouridine(20/20a) synthase (327 aa).

Residues 17–19 (PML) and Gln69 each bind FMN. The active-site Proton donor is Cys99. FMN is bound by residues Lys138, His170, 210 to 212 (NGG), and 232 to 233 (GR).

Belongs to the Dus family. DusA subfamily. Requires FMN as cofactor.

The catalysed reaction is 5,6-dihydrouridine(20) in tRNA + NADP(+) = uridine(20) in tRNA + NADPH + H(+). It catalyses the reaction 5,6-dihydrouridine(20) in tRNA + NAD(+) = uridine(20) in tRNA + NADH + H(+). The enzyme catalyses 5,6-dihydrouridine(20a) in tRNA + NADP(+) = uridine(20a) in tRNA + NADPH + H(+). It carries out the reaction 5,6-dihydrouridine(20a) in tRNA + NAD(+) = uridine(20a) in tRNA + NADH + H(+). Catalyzes the synthesis of 5,6-dihydrouridine (D), a modified base found in the D-loop of most tRNAs, via the reduction of the C5-C6 double bond in target uridines. Specifically modifies U20 and U20a in tRNAs. This Pasteurella multocida (strain Pm70) protein is tRNA-dihydrouridine(20/20a) synthase.